The chain runs to 366 residues: Autophagy-related protein 18b (366 aa).

WD repeat units follow at residues 6 to 44 (SLPS…LCYE), 178 to 218 (AHRS…KSYS), and 223 to 265 (TYPS…NQRS).

Belongs to the WD repeat PROPPIN family. Component of the PI(3,5)P2 regulatory complex at least composed of ATG18, SAC/FIG4, FAB1 and VAC14. As to expression, expressed in roots, stems, flowers and leaves.

The protein resides in the preautophagosomal structure membrane. It localises to the vacuole membrane. Its function is as follows. The PI(3,5)P2 regulatory complex regulates both the synthesis and turnover of phosphatidylinositol 3,5-bisphosphate (PtdIns(3,5)P2). Required for autophagy. The protein is Autophagy-related protein 18b (ATG18B) of Arabidopsis thaliana (Mouse-ear cress).